The following is a 425-amino-acid chain: Glutamate-1-semialdehyde 2,1-aminomutase (425 aa).

Residue lysine 265 is modified to N6-(pyridoxal phosphate)lysine.

Belongs to the class-III pyridoxal-phosphate-dependent aminotransferase family. HemL subfamily. As to quaternary structure, homodimer. The cofactor is pyridoxal 5'-phosphate.

It is found in the cytoplasm. It catalyses the reaction (S)-4-amino-5-oxopentanoate = 5-aminolevulinate. The protein operates within porphyrin-containing compound metabolism; protoporphyrin-IX biosynthesis; 5-aminolevulinate from L-glutamyl-tRNA(Glu): step 2/2. The sequence is that of Glutamate-1-semialdehyde 2,1-aminomutase from Psychromonas ingrahamii (strain DSM 17664 / CCUG 51855 / 37).